The sequence spans 182 residues: Pentatricopeptide repeat-containing protein At2g01360 (182 aa).

PPR repeat units lie at residues 30–64 (EKSA…QHSL), 65–95 (GVYH…LPDD), and 98–132 (GLSA…EIMP).

The protein belongs to the PPR family. P subfamily.

The protein is Pentatricopeptide repeat-containing protein At2g01360 of Arabidopsis thaliana (Mouse-ear cress).